The primary structure comprises 179 residues: ATP synthase subunit delta (179 aa).

The protein belongs to the ATPase delta chain family. F-type ATPases have 2 components, F(1) - the catalytic core - and F(0) - the membrane proton channel. F(1) has five subunits: alpha(3), beta(3), gamma(1), delta(1), epsilon(1). F(0) has three main subunits: a(1), b(2) and c(10-14). The alpha and beta chains form an alternating ring which encloses part of the gamma chain. F(1) is attached to F(0) by a central stalk formed by the gamma and epsilon chains, while a peripheral stalk is formed by the delta and b chains.

It is found in the cell inner membrane. Its function is as follows. F(1)F(0) ATP synthase produces ATP from ADP in the presence of a proton or sodium gradient. F-type ATPases consist of two structural domains, F(1) containing the extramembraneous catalytic core and F(0) containing the membrane proton channel, linked together by a central stalk and a peripheral stalk. During catalysis, ATP synthesis in the catalytic domain of F(1) is coupled via a rotary mechanism of the central stalk subunits to proton translocation. In terms of biological role, this protein is part of the stalk that links CF(0) to CF(1). It either transmits conformational changes from CF(0) to CF(1) or is implicated in proton conduction. This chain is ATP synthase subunit delta, found in Burkholderia multivorans (strain ATCC 17616 / 249).